We begin with the raw amino-acid sequence, 90 residues long: Acylphosphatase (90 aa).

The Acylphosphatase-like domain maps to 3 to 90 (HYHAIITGRV…AHYQDFRIKG (88 aa)). Active-site residues include Arg18 and Asn36.

It belongs to the acylphosphatase family.

It carries out the reaction an acyl phosphate + H2O = a carboxylate + phosphate + H(+). In Bacillus pumilus (strain SAFR-032), this protein is Acylphosphatase (acyP).